Here is a 490-residue protein sequence, read N- to C-terminus: Aspartyl/glutamyl-tRNA(Asn/Gln) amidotransferase subunit B (490 aa).

The protein belongs to the GatB/GatE family. GatB subfamily. In terms of assembly, heterotrimer of A, B and C subunits.

The enzyme catalyses L-glutamyl-tRNA(Gln) + L-glutamine + ATP + H2O = L-glutaminyl-tRNA(Gln) + L-glutamate + ADP + phosphate + H(+). The catalysed reaction is L-aspartyl-tRNA(Asn) + L-glutamine + ATP + H2O = L-asparaginyl-tRNA(Asn) + L-glutamate + ADP + phosphate + 2 H(+). In terms of biological role, allows the formation of correctly charged Asn-tRNA(Asn) or Gln-tRNA(Gln) through the transamidation of misacylated Asp-tRNA(Asn) or Glu-tRNA(Gln) in organisms which lack either or both of asparaginyl-tRNA or glutaminyl-tRNA synthetases. The reaction takes place in the presence of glutamine and ATP through an activated phospho-Asp-tRNA(Asn) or phospho-Glu-tRNA(Gln). The polypeptide is Aspartyl/glutamyl-tRNA(Asn/Gln) amidotransferase subunit B (Methylobacterium radiotolerans (strain ATCC 27329 / DSM 1819 / JCM 2831 / NBRC 15690 / NCIMB 10815 / 0-1)).